A 273-amino-acid polypeptide reads, in one-letter code: NH(3)-dependent NAD(+) synthetase (273 aa).

46 to 53 (GISGGQDS) lines the ATP pocket. Mg(2+) is bound at residue Asp52. Arg139 contacts deamido-NAD(+). Thr159 is a binding site for ATP. Glu164 is a binding site for Mg(2+). Deamido-NAD(+) is bound by residues Lys172 and Asp179. Residues Lys188 and Thr210 each contribute to the ATP site. Deamido-NAD(+) is bound at residue 259-260 (HK).

The protein belongs to the NAD synthetase family. In terms of assembly, homodimer.

The enzyme catalyses deamido-NAD(+) + NH4(+) + ATP = AMP + diphosphate + NAD(+) + H(+). The protein operates within cofactor biosynthesis; NAD(+) biosynthesis; NAD(+) from deamido-NAD(+) (ammonia route): step 1/1. Functionally, catalyzes the ATP-dependent amidation of deamido-NAD to form NAD. Uses ammonia as a nitrogen source. This is NH(3)-dependent NAD(+) synthetase from Mycobacteroides abscessus (strain ATCC 19977 / DSM 44196 / CCUG 20993 / CIP 104536 / JCM 13569 / NCTC 13031 / TMC 1543 / L948) (Mycobacterium abscessus).